A 207-amino-acid polypeptide reads, in one-letter code: Sodium/potassium-transporting ATPase subunit beta-1-interacting protein 1 (207 aa).

Transmembrane regions (helical) follow at residues 2–22 (GRCS…AAAL), 35–55 (APIL…LGTL), and 62–82 (LILY…IICF). Asparagine 100 carries an N-linked (GlcNAc...) asparagine glycan. Residues 147-167 (ALSSALQIFLALFGFVYACYV) form a helical membrane-spanning segment.

This sequence belongs to the NKAIN family. In terms of assembly, interacts with atp1b1 C-terminus.

The protein resides in the cell membrane. The sequence is that of Sodium/potassium-transporting ATPase subunit beta-1-interacting protein 1 (nkain1) from Xenopus tropicalis (Western clawed frog).